We begin with the raw amino-acid sequence, 533 residues long: CTP synthase (533 aa).

The segment at 1-270 (MVHLAKYIVV…GDYIVRRIEL (270 aa)) is amidoligase domain. Ser16 serves as a coordination point for CTP. Residue Ser16 participates in UTP binding. An ATP-binding site is contributed by 17 to 22 (SIGKGI). Residue Tyr57 participates in L-glutamine binding. Position 74 (Asp74) interacts with ATP. Positions 74 and 144 each coordinate Mg(2+). CTP contacts are provided by residues 151–153 (DIE), 191–196 (KTKPTQ), and Lys227. Residues 191–196 (KTKPTQ) and Lys227 each bind UTP. Residues 303 to 533 (YVELEDSYIS…FLRAALERSR (231 aa)) enclose the Glutamine amidotransferase type-1 domain. Residue Gly355 participates in L-glutamine binding. Cys382 acts as the Nucleophile; for glutamine hydrolysis in catalysis. L-glutamine contacts are provided by residues 383–386 (LGMQ), Glu405, and Arg462. Catalysis depends on residues His507 and Glu509.

This sequence belongs to the CTP synthase family. Homotetramer.

The enzyme catalyses UTP + L-glutamine + ATP + H2O = CTP + L-glutamate + ADP + phosphate + 2 H(+). It carries out the reaction L-glutamine + H2O = L-glutamate + NH4(+). The catalysed reaction is UTP + NH4(+) + ATP = CTP + ADP + phosphate + 2 H(+). The protein operates within pyrimidine metabolism; CTP biosynthesis via de novo pathway; CTP from UDP: step 2/2. With respect to regulation, allosterically activated by GTP, when glutamine is the substrate; GTP has no effect on the reaction when ammonia is the substrate. The allosteric effector GTP functions by stabilizing the protein conformation that binds the tetrahedral intermediate(s) formed during glutamine hydrolysis. Inhibited by the product CTP, via allosteric rather than competitive inhibition. Its function is as follows. Catalyzes the ATP-dependent amination of UTP to CTP with either L-glutamine or ammonia as the source of nitrogen. Regulates intracellular CTP levels through interactions with the four ribonucleotide triphosphates. The protein is CTP synthase of Methanothermobacter thermautotrophicus (strain ATCC 29096 / DSM 1053 / JCM 10044 / NBRC 100330 / Delta H) (Methanobacterium thermoautotrophicum).